The sequence spans 272 residues: Outer surface protein A (272 aa).

A signal peptide spans 1–16 (MKKYLLGIGLILALIA). Cys17 carries the N-palmitoyl cysteine lipid modification. The S-diacylglycerol cysteine moiety is linked to residue Cys17.

The protein belongs to the OspA lipoprotein family.

The protein localises to the cell outer membrane. Its subcellular location is the cell surface. This Borreliella burgdorferi (Lyme disease spirochete) protein is Outer surface protein A.